Here is a 144-residue protein sequence, read N- to C-terminus: Large ribosomal subunit protein uL13 (144 aa).

Belongs to the universal ribosomal protein uL13 family. In terms of assembly, part of the 50S ribosomal subunit.

This protein is one of the early assembly proteins of the 50S ribosomal subunit, although it is not seen to bind rRNA by itself. It is important during the early stages of 50S assembly. The polypeptide is Large ribosomal subunit protein uL13 (Nitratidesulfovibrio vulgaris (strain ATCC 29579 / DSM 644 / CCUG 34227 / NCIMB 8303 / VKM B-1760 / Hildenborough) (Desulfovibrio vulgaris)).